Reading from the N-terminus, the 447-residue chain is MARKLFGTDGVRGTANTAPMTAEMALRLGAAAGRYFRRDQSAAHRVVIGKDTRLSGYMFETALTAGFTSTGMNVLLLGPIPTPAVALLTQSMRADVGVMISASHNPADDNGIKFFGPDGYKLSDAAEEEIEEILAGDIRPAQAPNIGRAKRIDDGLGRYIERAKRTFPAHLRLDGLKVVVDCANGAAYKVAPAVLWELGADVIPVGVSPNGRNINRDCGSTAPQTAAEAVVSHGADVGICLDGDADRVMILDENGELADGDQLMALFATRWAAQGLLRDNTLVATVMSNLGLEYYLNDLGLKLVRTAVGDRYVVEAMRKGGWNLGGEQSGHIVMLDHGTTGDGLMAGLQFLAEMVQQGRSASELKHSFTTVPQRLENVRFGAGQDPLAAASVKSAIAAAEAQLSGKGRLLIRKSGTEPLVRVMAECEDEAMLTSVVGEVVAAVEAAC.

S103 serves as the catalytic Phosphoserine intermediate. 4 residues coordinate Mg(2+): S103, D242, D244, and D246. Phosphoserine is present on S103.

It belongs to the phosphohexose mutase family. It depends on Mg(2+) as a cofactor. Post-translationally, activated by phosphorylation.

It carries out the reaction alpha-D-glucosamine 1-phosphate = D-glucosamine 6-phosphate. In terms of biological role, catalyzes the conversion of glucosamine-6-phosphate to glucosamine-1-phosphate. The sequence is that of Phosphoglucosamine mutase from Dinoroseobacter shibae (strain DSM 16493 / NCIMB 14021 / DFL 12).